Here is an 864-residue protein sequence, read N- to C-terminus: Protein PAT1 homolog 1 (864 aa).

Polar residues predominate over residues 427 to 439; sequence PPNSRPNGPQFSG. 3 disordered regions span residues 427–460, 518–539, and 551–602; these read PPNSRPNGPQFSGPQVGPHSPGARGQQRRNSGMP, WTAHPKPESKQPLPASSESRKD, and EMQK…STHN. Positions 551–580 are enriched in basic and acidic residues; sequence EMQKERLRDREKERQRERQERIDRGEERKP.

It belongs to the PAT1 family.

Its subcellular location is the cytoplasm. It is found in the P-body. Functionally, RNA-binding protein involved in deadenylation-dependent decapping of mRNAs, leading to the degradation of mRNAs. Acts as a scaffold protein that connects deadenylation and decapping machinery. Required for the recruitment of P-body components such as cgh-1 in somatic blastomeres. May play a role in recruiting the decapping enzyme dcap-1 to cytoplasmic puncta in the cell body of the posterior touch receptor neuron, PLM. This is Protein PAT1 homolog 1 (patr-1) from Caenorhabditis briggsae.